A 466-amino-acid polypeptide reads, in one-letter code: CCA-adding enzyme (466 aa).

ATP-binding residues include Ser-55 and Arg-58. CTP is bound by residues Ser-55 and Arg-58. Mg(2+)-binding residues include Asp-67, Asp-69, and Asp-118. Residues His-141, Lys-161, and Tyr-170 each coordinate ATP. Positions 141, 161, and 170 each coordinate CTP.

The protein belongs to the tRNA nucleotidyltransferase/poly(A) polymerase family. Archaeal CCA-adding enzyme subfamily. Homodimer. Mg(2+) serves as cofactor.

The catalysed reaction is a tRNA precursor + 2 CTP + ATP = a tRNA with a 3' CCA end + 3 diphosphate. It catalyses the reaction a tRNA with a 3' CCA end + 2 CTP + ATP = a tRNA with a 3' CCACCA end + 3 diphosphate. In terms of biological role, catalyzes the addition and repair of the essential 3'-terminal CCA sequence in tRNAs without using a nucleic acid template. Adds these three nucleotides in the order of C, C, and A to the tRNA nucleotide-73, using CTP and ATP as substrates and producing inorganic pyrophosphate. tRNA 3'-terminal CCA addition is required both for tRNA processing and repair. Also involved in tRNA surveillance by mediating tandem CCA addition to generate a CCACCA at the 3' terminus of unstable tRNAs. While stable tRNAs receive only 3'-terminal CCA, unstable tRNAs are marked with CCACCA and rapidly degraded. This Haloarcula marismortui (strain ATCC 43049 / DSM 3752 / JCM 8966 / VKM B-1809) (Halobacterium marismortui) protein is CCA-adding enzyme.